The following is a 144-amino-acid chain: Cytochrome c oxidase subunit 4 isoform 1, mitochondrial (144 aa).

Over 1–73 the chain is Mitochondrial matrix; that stretch reads SVVKSEDFSL…SFAEMNRGSN (73 aa). K4 carries the post-translational modification N6-acetyllysine; alternate. N6-succinyllysine; alternate is present on K4. N6-acetyllysine is present on K28. Residues S31 and S33 each carry the phosphoserine modification. Position 35 is an N6-acetyllysine; alternate (K35). K35 carries the post-translational modification N6-succinyllysine; alternate. At K42 the chain carries N6-acetyllysine. Residues 74-99 form a helical membrane-spanning segment; that stretch reads EWKTVVGGAMFFIGFTALVIMWQKHY. Topologically, residues 100-144 are mitochondrial intermembrane; sequence VYGPLPQSFDKEWVAKQTKRMLDMKVNPIQGLASKWDYEKNEWKK.

The protein belongs to the cytochrome c oxidase IV family. Component of the cytochrome c oxidase (complex IV, CIV), a multisubunit enzyme composed of 14 subunits. The complex is composed of a catalytic core of 3 subunits MT-CO1, MT-CO2 and MT-CO3, encoded in the mitochondrial DNA, and 11 supernumerary subunits COX4I, COX5A, COX5B, COX6A, COX6B, COX6C, COX7A, COX7B, COX7C, COX8 and NDUFA4, which are encoded in the nuclear genome. The complex exists as a monomer or a dimer and forms supercomplexes (SCs) in the inner mitochondrial membrane with NADH-ubiquinone oxidoreductase (complex I, CI) and ubiquinol-cytochrome c oxidoreductase (cytochrome b-c1 complex, complex III, CIII), resulting in different assemblies (supercomplex SCI(1)III(2)IV(1) and megacomplex MCI(2)III(2)IV(2)). Interacts with PHB2; the interaction decreases in absence of SPHK2. Interacts with AFG1L. Interacts with ABCB7; this interaction allows the regulation of cellular iron homeostasis and cellular reactive oxygen species (ROS) levels in cardiomyocytes. Interacts with FLVCR2; this interaction occurs in the absence of heme and is disrupted upon heme binding. Interacts with IRGC.

It localises to the mitochondrion inner membrane. The protein operates within energy metabolism; oxidative phosphorylation. Its function is as follows. Component of the cytochrome c oxidase, the last enzyme in the mitochondrial electron transport chain which drives oxidative phosphorylation. The respiratory chain contains 3 multisubunit complexes succinate dehydrogenase (complex II, CII), ubiquinol-cytochrome c oxidoreductase (cytochrome b-c1 complex, complex III, CIII) and cytochrome c oxidase (complex IV, CIV), that cooperate to transfer electrons derived from NADH and succinate to molecular oxygen, creating an electrochemical gradient over the inner membrane that drives transmembrane transport and the ATP synthase. Cytochrome c oxidase is the component of the respiratory chain that catalyzes the reduction of oxygen to water. Electrons originating from reduced cytochrome c in the intermembrane space (IMS) are transferred via the dinuclear copper A center (CU(A)) of subunit 2 and heme A of subunit 1 to the active site in subunit 1, a binuclear center (BNC) formed by heme A3 and copper B (CU(B)). The BNC reduces molecular oxygen to 2 water molecules using 4 electrons from cytochrome c in the IMS and 4 protons from the mitochondrial matrix. The polypeptide is Cytochrome c oxidase subunit 4 isoform 1, mitochondrial (COX4I1) (Gorilla gorilla gorilla (Western lowland gorilla)).